We begin with the raw amino-acid sequence, 613 residues long: Proteasome-associated ATPase (613 aa).

Residues 1–29 (MSESERSEGFPEGFAGAGSGSLSSEDAAE) form a disordered region. A coiled-coil region spans residues 23–100 (SSEDAAELEA…LREEVDRLGQ (78 aa)). 300–305 (GCGKTL) lines the ATP pocket. Residue Lys-595 forms an Isoglutamyl lysine isopeptide (Lys-Gln) (interchain with Q-Cter in protein Pup) linkage. The segment at 612–613 (YL) is docks into pockets in the proteasome alpha-ring.

The protein belongs to the AAA ATPase family. As to quaternary structure, homohexamer. Assembles into a hexameric ring structure that caps the 20S proteasome core. Strongly interacts with the prokaryotic ubiquitin-like protein Pup through a hydrophobic interface; the interacting region of ARC lies in its N-terminal coiled-coil domain. There is one Pup binding site per ARC hexamer ring. Upon ATP-binding, the C-terminus of ARC interacts with the alpha-rings of the proteasome core, possibly by binding to the intersubunit pockets.

Its pathway is protein degradation; proteasomal Pup-dependent pathway. In terms of biological role, ATPase which is responsible for recognizing, binding, unfolding and translocation of pupylated proteins into the bacterial 20S proteasome core particle. May be essential for opening the gate of the 20S proteasome via an interaction with its C-terminus, thereby allowing substrate entry and access to the site of proteolysis. Thus, the C-termini of the proteasomal ATPase may function like a 'key in a lock' to induce gate opening and therefore regulate proteolysis. The sequence is that of Proteasome-associated ATPase from Mycolicibacterium smegmatis (strain ATCC 700084 / mc(2)155) (Mycobacterium smegmatis).